An 803-amino-acid chain; its full sequence is MLMLMLAAVATVVRAQTVCRFRTVRTGKVFANPVTLEGDLLFYAFSNTVVVKNVCKTDIAVYLGQRVFITKNRFEASILPLTIPKSMEVKMPSITSAHFVSDAMILFVIDGKVYSYNFIEDIWRTVNGITEPVSHISGDPCCFEGYFCLELSNNLFAYFRGGQMPGTNIYFSNNGGFSFELLNSDRMSHLKGLLGGIFHFHSLSQVGILLVENNLGTFHYLEYPLNHSTGVPFLYESPLEVIIKPQQRGFLILWNQKTLLVSSNSGQIVEAMQLMEEGNINDLNVEHAKLTIHSIASNTYELAFLVEQDQLYYGSQSYMGNYIIKLSNQQFWSEEASVHFWDVGMLEVLTPVSDPYFPAFDFKKCLVNVQLALMDQSLQLEPCNVEFLESTMEDRMFIIDMNSKLKLSALMVPRKGMNPTPLVMVSNPHALGFKANLTQFGNMYDGNSKFKLDIELQQQQHWGNSELNFTASIKHEAISSITVDIADKTLSCVDLKPLSTLISVGCDLTKKVIVQNKISACAMGILDPVLLQKNYSYTIEKEAYNPTSYSGEAQDDLIVFYQYKELGCPRLVYYDKPWKPVVELWKDGTLEEIMNAEYVILELNGIVTYSYSLTAATAHCRSQPQNWSIFKEDAEKPSLWNRETYVSCHEDNQDNPLLWPNVEYQILGGRTDNKIIFGQRNGIYTFYLTVVDPYYSYCDLNTIFSVYVYGALPVAEFRPMTSILLMVTVTLFTMWLAYAIPKQLRTERGRRLTGFCFQIFKYCPGICTCAWLRGKMRRGLRSRRVKDQPEKIPQIGKKPDIKK.

The first 15 residues, 1-15, serve as a signal peptide directing secretion; that stretch reads MLMLMLAAVATVVRA. Residues 16–720 lie on the Extracellular side of the membrane; sequence QTVCRFRTVR…ALPVAEFRPM (705 aa). Intrachain disulfides connect Cys-19–Cys-365, Cys-55–Cys-142, Cys-141–Cys-148, Cys-383–Cys-492, Cys-506–Cys-698, Cys-521–Cys-568, and Cys-620–Cys-648. Asn-226, Asn-418, Asn-436, Asn-468, Asn-534, Asn-545, and Asn-626 each carry an N-linked (GlcNAc...) asparagine glycan. Residues 721 to 742 form a helical membrane-spanning segment; that stretch reads TSILLMVTVTLFTMWLAYAIPK. The Cytoplasmic portion of the chain corresponds to 743 to 803; it reads QLRTERGRRL…QIGKKPDIKK (61 aa). The tract at residues 782-803 is disordered; that stretch reads SRRVKDQPEKIPQIGKKPDIKK.

It belongs to the CATSPERD family. In terms of assembly, component of the CatSper complex or CatSpermasome composed of the core pore-forming members CATSPER1, CATSPER2, CATSPER3 and CATSPER4 as well as auxiliary members CATSPERB, CATSPERG, CATSPERD, CATSPERE, CATSPERZ, C2CD6/CATSPERT, SLCO6C1, TMEM249, TMEM262 and EFCAB9. HSPA1 may be an additional auxiliary complex member. The core complex members CATSPER1, CATSPER2, CATSPER3 and CATSPER4 form a heterotetrameric channel. The auxiliary CATSPERB, CATSPERG, CATSPERD and CATSPERE subunits form a pavilion-like structure over the pore which stabilizes the complex through interactions with CATSPER4, CATSPER3, CATSPER1 and CATSPER2 respectively. SLCO6C1 interacts with CATSPERE and TMEM262/CATSPERH interacts with CATSPERB, further stabilizing the complex. C2CD6/CATSPERT interacts at least with CATSPERD and is required for targeting the CatSper complex in the flagellar membrane.

Its subcellular location is the cell projection. The protein resides in the cilium. It is found in the flagellum membrane. Auxiliary component of the CatSper complex, a complex involved in sperm cell hyperactivation. Sperm cell hyperactivation is needed for sperm motility which is essential late in the preparation of sperm for fertilization. Required for CATSPER1 stability before intraflagellar transport and/or incorporation of the CatSper complex channel into the flagellar membrane. This chain is Cation channel sperm-associated auxiliary subunit delta, found in Rattus norvegicus (Rat).